The following is a 112-amino-acid chain: Colipase (112 aa).

The signal sequence occupies residues 1-17 (MEKILVLLLVALAVVYA). The propeptide at 18–22 (VPDPR) is enterostatin, activation peptide. Disulfide bonds link Cys-34-Cys-45, Cys-40-Cys-56, Cys-44-Cys-78, Cys-66-Cys-86, and Cys-80-Cys-104.

The protein belongs to the colipase family. Forms a 1:1 stoichiometric complex with pancreatic lipase. Expressed by the pancreas.

The protein localises to the secreted. Colipase is a cofactor of pancreatic lipase. It allows the lipase to anchor itself to the lipid-water interface. Without colipase the enzyme is washed off by bile salts, which have an inhibitory effect on the lipase. Functionally, enterostatin has a biological activity as a satiety signal. The chain is Colipase (CLPS) from Canis lupus familiaris (Dog).